The primary structure comprises 317 residues: MTSKNFLSQLPPVLKLWWWIISLVVAFLPLGLHGLIIINAIFFALVIVVERKLKTFAIIFGWLLFFFWFNIVVNGFIFLPNSSALASQNENFLGHFIYSGGEQFGGVSWWSVNTRSLLRSLVIALRISMLFATSFLLTASTSIYELAFGVERLCTPLRYLKIKTQPLSILFALVFKLLPIVKGELKRIKQAQAIRGFKYGKLAFLNPVKLKTLFIPVLLSTVKKTEAVAFALQAKGYQLDNPNKTHYLQKYNLWGGIVFLGLFVLLSCLLMVNNWHLVYWTNPHYSFTFTHQNFCFFKQISSPQLLAFWQLELLAIG.

The next 7 membrane-spanning stretches (helical) occupy residues 18–38, 58–78, 92–112, 130–150, 165–185, 202–222, and 253–273; these read WWII…LIII, IIFG…GFIF, FLGH…WWSV, LFAT…AFGV, QPLS…KGEL, LAFL…LSTV, and LWGG…LMVN.

The protein belongs to the CbiQ family.

It localises to the cell membrane. This is an uncharacterized protein from Mycoplasma pneumoniae (strain ATCC 29342 / M129 / Subtype 1) (Mycoplasmoides pneumoniae).